The primary structure comprises 342 residues: Glutamyl endopeptidase (342 aa).

The N-terminal stretch at 1–29 is a signal peptide; the sequence is MKGKFLKVSSLFVATLTTATLVSSPAANA. Positions 30 to 68 are excised as a propeptide; it reads LSSKAMDNHPQQTQSSKQQTPKIKKGGNLKPLEQREHAN. The segment at 33-63 is disordered; that stretch reads KAMDNHPQQTQSSKQQTPKIKKGGNLKPLEQ. Low complexity predominate over residues 39–50; it reads PQQTQSSKQQTP. Active-site charge relay system residues include H119, D161, and S237. The tract at residues 283-342 is disordered; sequence FANDDQPNNPDNPDNPNNPDNPNNPDNPNNPDEPNNPDNPNNPDNPDNGDNNNSDNPDAA. The segment covering 286–342 has biased composition (low complexity); that stretch reads DDQPNNPDNPDNPNNPDNPNNPDNPNNPDEPNNPDNPNNPDNPDNGDNNNSDNPDAA. Tandem repeats lie at residues 289-291, 292-294, 295-297, 298-300, 301-303, 304-306, 307-309, 310-312, 316-318, 319-321, 322-324, 325-327, and 328-330. The tract at residues 289 to 330 is 13 X 3 AA repeats of P-[DN]-N; sequence PNNPDNPDNPNNPDNPNNPDNPNNPDEPNNPDNPNNPDNPDN.

This sequence belongs to the peptidase S1B family. Proteolytically cleaved by aureolysin (aur). This cleavage leads to the activation of SspA.

It is found in the secreted. It carries out the reaction Preferential cleavage: Glu-|-Xaa, Asp-|-Xaa.. Functionally, preferentially cleaves peptide bonds on the carboxyl-terminal side of aspartate and glutamate. Along with other extracellular proteases it is involved in colonization and infection of human tissues. Required for proteolytic maturation of thiol protease SspB and inactivation of SspC, an inhibitor of SspB. It is the most important protease for degradation of fibronectin-binding protein (FnBP) and surface protein A, which are involved in adherence to host cells. May also protect bacteria against host defense mechanism by cleaving the immunoglobulin classes IgG, IgA and IgM. May be involved in the stability of secreted lipases. The sequence is that of Glutamyl endopeptidase (sspA) from Staphylococcus aureus (strain Mu50 / ATCC 700699).